Consider the following 289-residue polypeptide: MRFLIVTGLSGAGKTQAMRALEDLGYFCVDNLPPVLMPKFAELVAHAENKIEKVALVVDVRGQKFFQDLDWALGELTKLGIKYEILFLEARDEVLLKRFKANRRGHPLGVRGSQILDNIKKERKFLENLRARADKVIDTSDLQPADLRNEILNYYGEEQKRSKISINIVTFGYKYGLPLDADLIMDVRFLPNPFYVKELRPLSGSDKPVYDYVFNYEVTKKFTEKFLDLIEFLMPFYQKEGKSNLVIAIGCTGGRHRSVAIANFLARTLEEKNYEVYLRHRDLEKHREE.

An ATP-binding site is contributed by 8 to 15 (GLSGAGKT). 59 to 62 (DVRG) is a GTP binding site.

Belongs to the RapZ-like family.

In terms of biological role, displays ATPase and GTPase activities. The protein is Nucleotide-binding protein CHY_0272 of Carboxydothermus hydrogenoformans (strain ATCC BAA-161 / DSM 6008 / Z-2901).